The chain runs to 152 residues: Deoxyuridine 5'-triphosphate nucleotidohydrolase (152 aa).

Substrate contacts are provided by residues 71–73 (RSG), Asn-84, 88–90 (LID), and Met-98.

It belongs to the dUTPase family. The cofactor is Mg(2+).

The catalysed reaction is dUTP + H2O = dUMP + diphosphate + H(+). The protein operates within pyrimidine metabolism; dUMP biosynthesis; dUMP from dCTP (dUTP route): step 2/2. Its function is as follows. This enzyme is involved in nucleotide metabolism: it produces dUMP, the immediate precursor of thymidine nucleotides and it decreases the intracellular concentration of dUTP so that uracil cannot be incorporated into DNA. This is Deoxyuridine 5'-triphosphate nucleotidohydrolase from Shewanella halifaxensis (strain HAW-EB4).